Here is a 152-residue protein sequence, read N- to C-terminus: MKAVIQRVLSGSVTSEGEVVGSIQKGLAVLVGIARDDTADDTEYILRKILGVRVWSNEDGSKMWCRNVKEIDGEVLLISQFTLMHVMKGNKPDFHNAMPPEDALKVFNALRDKLRCEYAPHKIATGNFQHYMNIHLSNDGPVTLILDSKKRS.

Residues 140 to 141 (GP) carry the Gly-cisPro motif, important for rejection of L-amino acids motif.

This sequence belongs to the DTD family. Homodimer.

It localises to the cytoplasm. The catalysed reaction is glycyl-tRNA(Ala) + H2O = tRNA(Ala) + glycine + H(+). It catalyses the reaction a D-aminoacyl-tRNA + H2O = a tRNA + a D-alpha-amino acid + H(+). Its function is as follows. An aminoacyl-tRNA editing enzyme that deacylates mischarged D-aminoacyl-tRNAs. Hydrolyzes correctly charged, achiral, glycyl-tRNA(Gly). Deacylates mischarged D.melanogaster and E.coli glycyl-tRNA(Ala), protecting cells against glycine mischarging by AlaRS. Acts via tRNA-based rather than protein-based catalysis; rejects L-amino acids rather than detecting D-amino acids in the active site. By recycling D-aminoacyl-tRNA to D-amino acids and free tRNA molecules, this enzyme counteracts the toxicity associated with the formation of D-aminoacyl-tRNA entities in vivo and helps enforce protein L-homochirality. This is D-aminoacyl-tRNA deacylase 1 (dtd1) from Leishmania major.